Here is a 331-residue protein sequence, read N- to C-terminus: NADH-quinone oxidoreductase subunit H (331 aa).

Transmembrane regions (helical) follow at residues A7–I27, M81–V101, I114–G134, I154–F174, V187–V207, F238–F258, W271–I291, and V310–A330.

Belongs to the complex I subunit 1 family. In terms of assembly, NDH-1 is composed of 13 different subunits. Subunits NuoA, H, J, K, L, M, N constitute the membrane sector of the complex.

The protein resides in the cell inner membrane. It carries out the reaction a quinone + NADH + 5 H(+)(in) = a quinol + NAD(+) + 4 H(+)(out). NDH-1 shuttles electrons from NADH, via FMN and iron-sulfur (Fe-S) centers, to quinones in the respiratory chain. The immediate electron acceptor for the enzyme in this species is believed to be ubiquinone. Couples the redox reaction to proton translocation (for every two electrons transferred, four hydrogen ions are translocated across the cytoplasmic membrane), and thus conserves the redox energy in a proton gradient. This subunit may bind ubiquinone. This chain is NADH-quinone oxidoreductase subunit H, found in Pseudomonas paraeruginosa (strain DSM 24068 / PA7) (Pseudomonas aeruginosa (strain PA7)).